Consider the following 688-residue polypeptide: Elongation factor G (688 aa).

In terms of domain architecture, tr-type G spans 8–282 (EKTRNIGIIA…AVVDYLPAPC (275 aa)). GTP is bound by residues 17–24 (AHIDAGKT), 81–85 (DTPGH), and 135–138 (NKMD).

Belongs to the TRAFAC class translation factor GTPase superfamily. Classic translation factor GTPase family. EF-G/EF-2 subfamily.

It localises to the cytoplasm. Functionally, catalyzes the GTP-dependent ribosomal translocation step during translation elongation. During this step, the ribosome changes from the pre-translocational (PRE) to the post-translocational (POST) state as the newly formed A-site-bound peptidyl-tRNA and P-site-bound deacylated tRNA move to the P and E sites, respectively. Catalyzes the coordinated movement of the two tRNA molecules, the mRNA and conformational changes in the ribosome. This Aster yellows witches'-broom phytoplasma (strain AYWB) protein is Elongation factor G.